A 313-amino-acid chain; its full sequence is DNA-directed RNA polymerase subunit alpha (313 aa).

Positions 1–229 (MNSSNLLMEC…NLFKSIGEQK (229 aa)) are alpha N-terminal domain (alpha-NTD). The interval 243-313 (IKPIDPYTHI…LKNKLGIVLK (71 aa)) is alpha C-terminal domain (alpha-CTD).

It belongs to the RNA polymerase alpha chain family. As to quaternary structure, in plastids the minimal PEP RNA polymerase catalytic core is composed of four subunits: alpha, beta, beta', and beta''. When a (nuclear-encoded) sigma factor is associated with the core the holoenzyme is formed, which can initiate transcription.

It localises to the plastid. Its subcellular location is the chloroplast. The enzyme catalyses RNA(n) + a ribonucleoside 5'-triphosphate = RNA(n+1) + diphosphate. Functionally, DNA-dependent RNA polymerase catalyzes the transcription of DNA into RNA using the four ribonucleoside triphosphates as substrates. The sequence is that of DNA-directed RNA polymerase subunit alpha from Thalassiosira pseudonana (Marine diatom).